We begin with the raw amino-acid sequence, 129 residues long: Protein BEX2 (129 aa).

The tract at residues 1-37 is disordered; the sequence is MESKVEQGVKNLNMENDHQEKEEKEEKPQDASKRDPI. A compositionally biased stretch (basic and acidic residues) spans 15–36; that stretch reads ENDHQEKEEKEEKPQDASKRDP. Arginine 51 carries the omega-N-methylarginine modification. Residues 118-122 are his cluster; it reads HHDHH. A Zn(2+)-binding site is contributed by cysteine 126.

It belongs to the BEX family. Interacts with LMO2, possibly leading to regulate the transcriptional activity of a DNA-binding complex containing LMO2. Interacts with OMP. In terms of tissue distribution, primarily localized to neuronal cells within several regions of the brain, including the olfactory epithelium, bulb, peri/paraventricular nuclei, suprachiasmatic nucleus, arcuate nucleus, median eminence, lateral hypothalamic area, thalamus, hippocampus and cerebellum (at protein level).

It is found in the cytoplasm. It localises to the nucleus. Regulator of mitochondrial apoptosis and G1 cell cycle. Regulates the level of PP2A regulatory subunit B and PP2A phosphatase activity. In absence of reductive stress, acts as a pseudosubstrate for the CRL2(FEM1B) complex: associates with FEM1B via zinc, thereby preventing association between FEM1B and its substrates. The sequence is that of Protein BEX2 from Mus musculus (Mouse).